Here is a 230-residue protein sequence, read N- to C-terminus: Octanoyltransferase (230 aa).

Residues 38–215 (AGGADTLLLL…AVCAALDGVL (178 aa)) form the BPL/LPL catalytic domain. Residues 76–83 (RGGKITWH), 145–147 (AIG), and 158–160 (GFA) each bind substrate. C176 (acyl-thioester intermediate) is an active-site residue.

The protein belongs to the LipB family.

The protein localises to the cytoplasm. It catalyses the reaction octanoyl-[ACP] + L-lysyl-[protein] = N(6)-octanoyl-L-lysyl-[protein] + holo-[ACP] + H(+). The protein operates within protein modification; protein lipoylation via endogenous pathway; protein N(6)-(lipoyl)lysine from octanoyl-[acyl-carrier-protein]: step 1/2. Functionally, catalyzes the transfer of endogenously produced octanoic acid from octanoyl-acyl-carrier-protein onto the lipoyl domains of lipoate-dependent enzymes. Lipoyl-ACP can also act as a substrate although octanoyl-ACP is likely to be the physiological substrate. This chain is Octanoyltransferase, found in Mycobacterium tuberculosis (strain ATCC 25177 / H37Ra).